We begin with the raw amino-acid sequence, 72 residues long: MFVTSKKMTAAVLAITLAMSLSACSNWSKRDRNTAIGAGAGALGGAVLTDGSTLGTLGGAAVGGVIGHQVGK.

An N-terminal signal peptide occupies residues 1 to 23; the sequence is MFVTSKKMTAAVLAITLAMSLSA. Cys24 is lipidated: N-palmitoyl cysteine. Cys24 is lipidated: S-diacylglycerol cysteine.

It localises to the cell membrane. In terms of biological role, provides resistance to osmotic stress. May be important for stationary-phase survival. The protein is Osmotically-inducible lipoprotein B (osmB) of Escherichia coli O157:H7.